A 204-amino-acid chain; its full sequence is N-(5'-phosphoribosyl)anthranilate isomerase (204 aa).

It belongs to the TrpF family.

It catalyses the reaction N-(5-phospho-beta-D-ribosyl)anthranilate = 1-(2-carboxyphenylamino)-1-deoxy-D-ribulose 5-phosphate. Its pathway is amino-acid biosynthesis; L-tryptophan biosynthesis; L-tryptophan from chorismate: step 3/5. The protein is N-(5'-phosphoribosyl)anthranilate isomerase of Pseudomonas fluorescens (strain Pf0-1).